We begin with the raw amino-acid sequence, 218 residues long: Carboxylesterase 2 (218 aa).

Residues S114, D168, and H199 each act as charge relay system in the active site.

It belongs to the AB hydrolase superfamily. AB hydrolase 2 family. In terms of assembly, homodimer.

The catalysed reaction is a carboxylic ester + H2O = an alcohol + a carboxylate + H(+). In terms of biological role, hydrolyzes carboxylic ester bonds with relatively broad substrate specificity. This is Carboxylesterase 2 (estB) from Pseudomonas fluorescens.